Consider the following 326-residue polypeptide: Tagatose 1,6-diphosphate aldolase (326 aa).

The protein belongs to the aldolase LacD family.

It catalyses the reaction D-tagatofuranose 1,6-bisphosphate = D-glyceraldehyde 3-phosphate + dihydroxyacetone phosphate. It participates in carbohydrate metabolism; D-tagatose 6-phosphate degradation; D-glyceraldehyde 3-phosphate and glycerone phosphate from D-tagatose 6-phosphate: step 2/2. This Staphylococcus aureus (strain MW2) protein is Tagatose 1,6-diphosphate aldolase.